A 75-amino-acid chain; its full sequence is UPF0346 protein OB1736 (75 aa).

This sequence belongs to the UPF0346 family.

The chain is UPF0346 protein OB1736 from Oceanobacillus iheyensis (strain DSM 14371 / CIP 107618 / JCM 11309 / KCTC 3954 / HTE831).